The primary structure comprises 56 residues: MAVPARRTSKAKKNKRRTHKGLTTPGLSRDSETGEYRMSHRISPDGTYKGRTIIEK.

The interval 1–56 is disordered; the sequence is MAVPARRTSKAKKNKRRTHKGLTTPGLSRDSETGEYRMSHRISPDGTYKGRTIIEK. Basic residues predominate over residues 7-20; sequence RTSKAKKNKRRTHK. A compositionally biased stretch (basic and acidic residues) spans 29–38; sequence RDSETGEYRM.

The protein belongs to the bacterial ribosomal protein bL32 family.

The sequence is that of Large ribosomal subunit protein bL32 from Listeria monocytogenes serotype 4a (strain HCC23).